A 150-amino-acid chain; its full sequence is UPF0178 protein Sbal_1771 (150 aa).

Belongs to the UPF0178 family.

This is UPF0178 protein Sbal_1771 from Shewanella baltica (strain OS155 / ATCC BAA-1091).